A 934-amino-acid chain; its full sequence is Complement component C6 (934 aa).

The first 21 residues, 1–21, serve as a signal peptide directing secretion; that stretch reads MTRHLTLCFILLVMLIDKSEA. 11 disulfide bridges follow: cysteine 22/cysteine 61, cysteine 24/cysteine 65, cysteine 35/cysteine 73, cysteine 39/cysteine 78, cysteine 82/cysteine 117, cysteine 93/cysteine 127, cysteine 96/cysteine 133, cysteine 140/cysteine 151, cysteine 146/cysteine 164, cysteine 158/cysteine 173, and cysteine 180/cysteine 218. TSP type-1 domains are found at residues 22-79 and 81-134; these read CFCD…QTCP and NCVL…KLCK. An LDL-receptor class A domain is found at 138-175; that stretch reads TNCKNKFLCDSGRCIPSKLECNGENDCGDNSDERNCGR. Positions 156, 159, 161, 163, 169, and 170 each coordinate Ca(2+). The MACPF domain maps to 176–522; sequence TKPVCTRIYT…EYAAKFDPCQ (347 aa). The chain crosses the membrane as a beta stranded span at residues 278–290; it reads FFPIPIFHFSEKN. Residue asparagine 324 is glycosylated (N-linked (GlcNAc...) asparagine). 16 disulfide bridges follow: cysteine 399-cysteine 420, cysteine 499-cysteine 623, cysteine 521-cysteine 570, cysteine 523-cysteine 539, cysteine 526-cysteine 541, cysteine 543-cysteine 552, cysteine 577-cysteine 611, cysteine 589-cysteine 601, cysteine 644-cysteine 686, cysteine 672-cysteine 699, cysteine 704-cysteine 746, cysteine 732-cysteine 761, cysteine 773-cysteine 823, cysteine 784-cysteine 801, cysteine 786-cysteine 837, and cysteine 793-cysteine 816. The chain crosses the membrane as a beta stranded span at residues 402 to 415; sequence YETKKLKFLYMEIH. The region spanning 523 to 553 is the EGF-like domain; it reads CAPCPNNGRPRLSGTECLCVCQSGTYGENCE. The TSP type-1 3 domain occupies 565–612; sequence DGNWGCWSSWSACNAAYRRSRTRECNNPAPQRGGQSCGGKDQQEEDCT. CCP regions lie at residues 611 to 688 and 689 to 765; these read CTVS…RCLP and DRTW…EQAI. Sushi domains follow at residues 642–701 and 702–763; these read SGCS…ECQR and TSCL…TCEQ. A C5b-binding domain region spans residues 642-934; the sequence is SGCSQPPLPE…EILNPGRCPD (293 aa). The tract at residues 766–840 is factor I module (FIM) 1; it reads LTKSKDLCPP…FVHSGSCQEG (75 aa). Positions 785–839 constitute a Kazal-like 1 domain; that stretch reads ICMSPEEDCSAYSEDLCIFDGGSSQYFTSSACKFLAGKCLNNTQSHFVHSGSCQE. N-linked (GlcNAc...) asparagine glycosylation is found at asparagine 825, asparagine 855, and asparagine 872. The factor I module (FIM) 2 stretch occupies residues 858-934; sequence KRVSCGYNTC…EILNPGRCPD (77 aa). 5 disulfides stabilise this stretch: cysteine 862-cysteine 873, cysteine 867-cysteine 919, cysteine 880-cysteine 897, cysteine 882-cysteine 932, and cysteine 888-cysteine 912. A Kazal-like 2 domain is found at 876-934; sequence HTSNCVCLLPPQCSKDENQLYCVKIGSSMREKTVNICTLGAVRCANIKVEILNPGRCPD.

This sequence belongs to the complement C6/C7/C8/C9 family. In terms of assembly, component of the membrane attack complex (MAC), composed of complement C5b, C6, C7, C8A, C8B, C8G and multiple copies of the pore-forming subunit C9. In terms of processing, all cysteine residues are assumed to be cross-linked to one another. Individual modules containing an even number of conserved cysteine residues are supposed to have disulfide linkages only within the same module.

It localises to the secreted. It is found in the target cell membrane. With respect to regulation, membrane attack complex (MAC) assembly is inhibited by CD59, thereby protecting self-cells from damage during complement activation. MAC assembly is also inhibited by clusterin (CLU) chaperones that inhibit polymerization of C9. Functionally, component of the membrane attack complex (MAC), a multiprotein complex activated by the complement cascade, which inserts into a target cell membrane and forms a pore, leading to target cell membrane rupture and cell lysis. The MAC is initiated by proteolytic cleavage of C5 into complement C5b in response to the classical, alternative, lectin and GZMK complement pathways. The complement pathways consist in a cascade of proteins that leads to phagocytosis and breakdown of pathogens and signaling that strengthens the adaptive immune system. Together with component C5b, involved in MAC complex assembly: complement C5b and C6 associate with the outer leaflet of target cell membrane, reducing the energy for membrane bending. This is Complement component C6 from Mus musculus (Mouse).